The chain runs to 434 residues: Na(+)/H(+) antiporter NhaA 1 (434 aa).

Over residues 1-15 (MISPNPALPTPPHAP) the composition is skewed to pro residues. The segment at 1 to 21 (MISPNPALPTPPHAPTAPGRG) is disordered. A run of 12 helical transmembrane segments spans residues 34-54 (GGIL…SPAA), 74-94 (LSVS…VVGL), 112-132 (ALPI…FTLI), 143-163 (GWAI…AVVG), 173-193 (FLLT…AVFY), 196-216 (GIAF…GILV), 222-242 (AWYV…ASGI), 245-265 (TIAG…RAGV), 294-314 (IAVP…LEGL), 326-346 (IIVA…LLVA), 362-382 (VLGL…VGEL), and 393-413 (AVKV…GTLL).

The protein belongs to the NhaA Na(+)/H(+) (TC 2.A.33) antiporter family.

The protein resides in the cell membrane. It carries out the reaction Na(+)(in) + 2 H(+)(out) = Na(+)(out) + 2 H(+)(in). Na(+)/H(+) antiporter that extrudes sodium in exchange for external protons. The sequence is that of Na(+)/H(+) antiporter NhaA 1 from Clavibacter michiganensis subsp. michiganensis (strain NCPPB 382).